We begin with the raw amino-acid sequence, 369 residues long: Eukaryotic translation initiation factor 3 subunit F (369 aa).

Residues 31 to 170 (VNIQPQAVFS…TKTYISAPVA (140 aa)) form the MPN domain. Residues 309–334 (LDEGKEGGEKKDGEGAEGDKKTDGQR) show a composition bias toward basic and acidic residues. A disordered region spans residues 309-369 (LDEGKEGGEK…EPREPREAAE (61 aa)). A compositionally biased stretch (gly residues) spans 335–353 (GQRGQGGKRGGRSGGAGGR). Basic and acidic residues predominate over residues 354–369 (GGREQREPREPREAAE).

The protein belongs to the eIF-3 subunit F family. In terms of assembly, component of the eukaryotic translation initiation factor 3 (eIF-3) complex.

The protein resides in the cytoplasm. Component of the eukaryotic translation initiation factor 3 (eIF-3) complex, which is involved in protein synthesis of a specialized repertoire of mRNAs and, together with other initiation factors, stimulates binding of mRNA and methionyl-tRNAi to the 40S ribosome. The eIF-3 complex specifically targets and initiates translation of a subset of mRNAs involved in cell proliferation. In Neurospora crassa (strain ATCC 24698 / 74-OR23-1A / CBS 708.71 / DSM 1257 / FGSC 987), this protein is Eukaryotic translation initiation factor 3 subunit F.